Consider the following 586-residue polypeptide: MCGILAVLGCSDFTQAKRVRVLELSRRLKHRGPDWSGLHQHGDCYLAHQRLAIVDPASGDQPLFNEDKSIIVTVNGEIYNHEELRKQLPNHQFRTGSDCDVIAHLYEEHGENFMDMLDGIFSFVLLDTRDNTFIVARDAIGVTSLYIGWGLDGSVWISSEMKGLNDDCEHFEVFPPGHLYSSRERAFRRWYNPTWFSESIPSAPYDPLAVRHAFEKAVIKRLMTDVPFGVLLSGGLDSSLVASITSRYLATTKAAEQWGSKLHSFCVGLEGSPDLKAAKEVADYLGTVHHEFTFTVQDGIDAIEEVIYHVETYDVTTIRASTPMFLMSRKIKSLGVKWVISGEGSDEIFGGYLYFHKAPNKEEFHTETCRKIKALHQYDCLRANKSTFAWGLEARVPFLDKEFINVAMNIDPEYKMIKRDEGRIEKYILRRAFDDEEKPYLPKHILYRQKEQFSDGVGYSWIDGLKDHAAKHVTDKMILNAGNIFRHNTPLTKEAYYYRMIFERFFPQNSARLTVPGGPTVACSTAKAVEWDAAWSNNLDPSGRAALGVHLSAYDDKQNNLINNKPVEFEKLIPMEAPSLGVAIHS.

Cys-2 acts as the For GATase activity in catalysis. Residues 2–185 (CGILAVLGCS…PGHLYSSRER (184 aa)) form the Glutamine amidotransferase type-2 domain. L-glutamine is bound by residues 50-54 (RLAIV), 75-77 (NGE), and Asp-98. The region spanning 193–516 (PTWFSESIPS…PQNSARLTVP (324 aa)) is the Asparagine synthetase domain. Residues Leu-231, Val-267, and 341–342 (SG) each bind ATP.

The enzyme catalyses L-aspartate + L-glutamine + ATP + H2O = L-asparagine + L-glutamate + AMP + diphosphate + H(+). Its pathway is amino-acid biosynthesis; L-asparagine biosynthesis; L-asparagine from L-aspartate (L-Gln route): step 1/1. The chain is Asparagine synthetase [glutamine-hydrolyzing] 1 (AS1) from Lotus japonicus (Lotus corniculatus var. japonicus).